A 157-amino-acid polypeptide reads, in one-letter code: Small ribosomal subunit protein uS7 (157 aa).

Belongs to the universal ribosomal protein uS7 family. In terms of assembly, part of the 30S ribosomal subunit. Contacts proteins S9 and S11.

In terms of biological role, one of the primary rRNA binding proteins, it binds directly to 16S rRNA where it nucleates assembly of the head domain of the 30S subunit. Is located at the subunit interface close to the decoding center, probably blocks exit of the E-site tRNA. The protein is Small ribosomal subunit protein uS7 of Acidovorax ebreus (strain TPSY) (Diaphorobacter sp. (strain TPSY)).